The sequence spans 835 residues: Cap-specific mRNA (nucleoside-2'-O-)-methyltransferase 1 (835 aa).

The tract at residues 1 to 67 (MKRRTDPECT…EGKQHSSDSF (67 aa)) is disordered. A Bipartite nuclear localization signal motif is present at residues 2–19 (KRRTDPECTAPIKKQKKR). 5 positions are modified to phosphoserine: S28, S31, S53, S66, and S91. Over residues 37 to 54 (SSVSHGAKASTTSLSGSD) the composition is skewed to polar residues. A compositionally biased stretch (basic and acidic residues) spans 57–67 (TEGKQHSSDSF). Residues 87–133 (YNSVSQKLMAKMGFREGEGLGKYSQGRKDIVEASSQKGRRGLGLTLR) form the G-patch domain. K108 carries the N6-acetyllysine modification. Residues 203–207 (KSVFD) and R218 each bind substrate. One can recognise a RrmJ-type SAM-dependent 2'-O-MTase domain in the interval 231–450 (FFLNRAAMKM…ERYVVCKGLK (220 aa)). N234 serves as a coordination point for S-adenosyl-L-methionine. The active site involves K239. S-adenosyl-L-methionine contacts are provided by residues 277–283 (CAGPGGF) and 335–336 (DI). The active site involves D364. A substrate-binding site is contributed by 374 to 376 (NLQ). K404 functions as the Proton acceptor in the catalytic mechanism. A substrate-binding site is contributed by N439. Positions 727-835 (SSGTPKLSYT…VLSFIQMHRA (109 aa)) are interaction with POLR2A. A WW domain is found at 752–786 (RTVNEPWTMGFSKSFKKKFFYNKKTKDSTFDLPAD).

In terms of assembly, interacts with POLR2A (via C-terminus).

The protein resides in the nucleus. It catalyses the reaction a 5'-end (N(7)-methyl 5'-triphosphoguanosine)-ribonucleoside in mRNA + S-adenosyl-L-methionine = a 5'-end (N(7)-methyl 5'-triphosphoguanosine)-(2'-O-methyl-ribonucleoside) in mRNA + S-adenosyl-L-homocysteine + H(+). S-adenosyl-L-methionine-dependent methyltransferase that mediates mRNA cap1 2'-O-ribose methylation to the 5'-cap structure of mRNAs. Methylates the ribose of the first nucleotide of a m(7)GpppG-capped mRNA and small nuclear RNA (snRNA) to produce m(7)GpppRm (cap1). Displays a preference for cap0 transcripts. Cap1 modification is linked to higher levels of translation. May be involved in the interferon response pathway. The sequence is that of Cap-specific mRNA (nucleoside-2'-O-)-methyltransferase 1 (CMTR1) from Homo sapiens (Human).